A 389-amino-acid chain; its full sequence is Diaminopimelate decarboxylase (389 aa).

Lys58 carries the N6-(pyridoxal phosphate)lysine modification. Residues Gly233 and 271–274 (ELGR) contribute to the pyridoxal 5'-phosphate site. The substrate site is built by Arg274, Arg310, Tyr314, Glu342, and Tyr370. Tyr370 is a binding site for pyridoxal 5'-phosphate.

Belongs to the Orn/Lys/Arg decarboxylase class-II family. LysA subfamily. Homodimer. Pyridoxal 5'-phosphate serves as cofactor.

It carries out the reaction meso-2,6-diaminopimelate + H(+) = L-lysine + CO2. It participates in amino-acid biosynthesis; L-lysine biosynthesis via DAP pathway; L-lysine from DL-2,6-diaminopimelate: step 1/1. Functionally, specifically catalyzes the decarboxylation of meso-diaminopimelate (meso-DAP) to L-lysine. This is Diaminopimelate decarboxylase from Francisella tularensis subsp. holarctica (strain LVS).